The chain runs to 92 residues: MSLRAVWHLGLLGSLVGAVLAATHRGPAANTTDPLTHAPVSPHPSPLGGFAVPLVVGGLCAVVLGAACLLELLRRTCRGWGRYHPYMDPVVV.

A signal peptide spans 1–21 (MSLRAVWHLGLLGSLVGAVLA). The Extracellular portion of the chain corresponds to 22–49 (ATHRGPAANTTDPLTHAPVSPHPSPLGG). Asn30 carries N-linked (GlcNAc...) asparagine; by host glycosylation. A helical transmembrane segment spans residues 50 to 70 (FAVPLVVGGLCAVVLGAACLL). Topologically, residues 71-92 (ELLRRTCRGWGRYHPYMDPVVV) are cytoplasmic.

It belongs to the alphaherpesvirinae glycoprotein J family.

The protein resides in the host Golgi apparatus membrane. It localises to the host endoplasmic reticulum membrane. The protein localises to the host endosome membrane. Inhibits host cell apoptosis. Induces an increase in reactive oxygen species (ROS) in the host cell. This Homo sapiens (Human) protein is Envelope glycoprotein J (gJ).